We begin with the raw amino-acid sequence, 199 residues long: Pneumococcal vaccine antigen A homolog (199 aa).

It is found in the cell surface. The polypeptide is Pneumococcal vaccine antigen A homolog (pvaA) (Streptococcus pyogenes serotype M18 (strain MGAS8232)).